The primary structure comprises 643 residues: Extracellular metalloproteinase 4 (643 aa).

The signal sequence occupies residues 1 to 18 (MHGLMLAGLLALPLSVLG). A propeptide spanning residues 19–254 (HPTESHSSGI…VHSVVDYVSA (236 aa)) is cleaved from the precursor. The segment covering 47–57 (TKSDAVPKQDG) has biased composition (basic and acidic residues). Residues 47–73 (TKSDAVPKQDGESFTTSSTGNDNSSSG) are disordered. The span at 61-73 (TTSSTGNDNSSSG) shows a compositional bias: low complexity. Asparagine 271 and asparagine 420 each carry an N-linked (GlcNAc...) asparagine glycan. Histidine 437 contributes to the Zn(2+) binding site. Residue glutamate 438 is part of the active site. Histidine 441 lines the Zn(2+) pocket. Asparagine 603 and asparagine 629 each carry an N-linked (GlcNAc...) asparagine glycan.

This sequence belongs to the peptidase M36 family. The cofactor is Zn(2+).

It localises to the secreted. In terms of biological role, secreted metalloproteinase probably acting as a virulence factor. This Trichophyton rubrum (Athlete's foot fungus) protein is Extracellular metalloproteinase 4 (MEP4).